A 335-amino-acid polypeptide reads, in one-letter code: Methionyl-tRNA formyltransferase (335 aa).

Position 122-125 (122-125 (SLLP)) interacts with (6S)-5,6,7,8-tetrahydrofolate. Residues 203–222 (DSHGPLGEPQDPAKVSKAPR) form a disordered region.

It belongs to the Fmt family.

The enzyme catalyses L-methionyl-tRNA(fMet) + (6R)-10-formyltetrahydrofolate = N-formyl-L-methionyl-tRNA(fMet) + (6S)-5,6,7,8-tetrahydrofolate + H(+). Its function is as follows. Attaches a formyl group to the free amino group of methionyl-tRNA(fMet). The formyl group appears to play a dual role in the initiator identity of N-formylmethionyl-tRNA by promoting its recognition by IF2 and preventing the misappropriation of this tRNA by the elongation apparatus. The chain is Methionyl-tRNA formyltransferase from Rhodopirellula baltica (strain DSM 10527 / NCIMB 13988 / SH1).